We begin with the raw amino-acid sequence, 116 residues long: Antimicrobial peptide 1b (116 aa).

The N-terminal stretch at 1-34 is a signal peptide; that stretch reads MKPHMSATVLRAPRVAAILLAVVLAAVLATAVNG. The Chitin-binding type-1 domain maps to 35 to 77; that stretch reads AQRCGDQARGAKCPNCLCCGKYGFCGSGDAYCGAGSCQSQCRG. Disulfide bonds link C38/C53, C47/C59, C50/C78, C52/C66, and C71/C75. The propeptide occupies 80 to 116; it reads DDVVGQALPAEPGSTRATAASSASARGLNLTATTGGP. The segment at 89-116 is disordered; it reads AEPGSTRATAASSASARGLNLTATTGGP. Residues 93–105 are compositionally biased toward low complexity; it reads STRATAASSASAR.

Functionally, binds chitin. Has antifungal activity against the fungi F.solani (IC(50)=5 ug/ml), F.verticillioides (IC(50)=30 ug/ml), F.oxysporum (IC(50)=5 ug/ml), B.sorokiniana (IC(50)=5 ug/ml), B.cinerea (IC(50)=20 ug/ml) and N.crassa (IC(50)=10 ug/ml). Inhibits hyphal elongation and causes browning of hyphae in F.oxysporum. Causes destruction and discoloration of spores in B.sorokiniana. Inhibits the development of disease caused by the fungus P.infestans on potato tubers. Has antibacterial activity against the Gram-negative bacteria P.syringae and E.carotovora, and the Gram-positive bacterium C.michiganensis. In terms of biological role, has antifungal activity against F.verticillioides (IC(50)=2.7 ug/ml). At concentrations between 45 uM and 225 uM, inhibits activity of metalloproteinase fungalysin Fv-cpm from F.verticillioides. This Triticum kiharae (Wheat) protein is Antimicrobial peptide 1b.